Reading from the N-terminus, the 460-residue chain is Inner membrane symporter YicJ (460 aa).

The Periplasmic portion of the chain corresponds to 1 to 11; the sequence is MKSEVLSVKEK. 2 consecutive transmembrane segments (helical) span residues 12–32 and 33–53; these read IGYG…MLYM and MFFY…MFLV. Over 54 to 80 the chain is Periplasmic; sequence ARALDAISDPCMGLLADRTRSRWGKFR. A helical membrane pass occupies residues 81–101; it reads PWVLFGALPFGIVCVLAYSTP. Topologically, residues 102–116 are cytoplasmic; sequence DLSMNGKMIYAAITY. The chain crosses the membrane as a helical span at residues 117–137; it reads TLLTLLYTVVNIPYCALGGVI. Residues 138–152 lie on the Periplasmic side of the membrane; the sequence is TNDPTQRISLQSWRF. The chain crosses the membrane as a helical span at residues 153-173; the sequence is VLATAGGMLSTVLMMPLVNLI. The Cytoplasmic portion of the chain corresponds to 174-181; that stretch reads GGDNKPLG. A helical membrane pass occupies residues 182–202; it reads FQGGIAVLSVVAFMMLAFCFF. The Periplasmic portion of the chain corresponds to 203–248; it reads TTKERVEAPPTTTSMREDLRDIWQNDQWRIVGLLTIFNILAVCVRG. A helical transmembrane segment spans residues 249-269; that stretch reads GAMMYYVTWILGTPEVFVAFL. The Cytoplasmic portion of the chain corresponds to 270 to 288; the sequence is TTYCVGNLIGSALAKPLTD. The helical transmembrane segment at 289 to 309 threads the bilayer; the sequence is WKCKVTIFWWTNALLAVISLA. A topological domain (periplasmic) is located at residue Met-310. Residues 311–331 traverse the membrane as a helical segment; it reads FFVPMQASITMFVFIFVIGVL. Residues 332 to 366 are Cytoplasmic-facing; the sequence is HQLVTPIQWVMMSDTVDYGEWCNGKRLTGISFAGT. The helical transmembrane segment at 367-387 threads the bilayer; that stretch reads LFVLKLGLAFGGALIGWMLAY. The Periplasmic segment spans residues 388 to 403; sequence GGYDAAEKAQNSATIS. A helical membrane pass occupies residues 404 to 424; sequence IIIALFTIVPAICYLLSAIIA. Over 425–460 the chain is Cytoplasmic; the sequence is KRYYSLTTHNLKTVMEQLAQGKRRCQQQFTSQEVQN.

Belongs to the sodium:galactoside symporter (TC 2.A.2) family.

Its subcellular location is the cell inner membrane. The protein is Inner membrane symporter YicJ (yicJ) of Escherichia coli (strain K12).